The sequence spans 188 residues: ATP synthase subunit b 1 (188 aa).

The helical transmembrane segment at 7–27 (LSVLALAMLAANPAFAAGGGI) threads the bilayer.

It belongs to the ATPase B chain family. In terms of assembly, F-type ATPases have 2 components, F(1) - the catalytic core - and F(0) - the membrane proton channel. F(1) has five subunits: alpha(3), beta(3), gamma(1), delta(1), epsilon(1). F(0) has three main subunits: a(1), b(2) and c(10-14). The alpha and beta chains form an alternating ring which encloses part of the gamma chain. F(1) is attached to F(0) by a central stalk formed by the gamma and epsilon chains, while a peripheral stalk is formed by the delta and b chains.

It is found in the cell inner membrane. Its function is as follows. F(1)F(0) ATP synthase produces ATP from ADP in the presence of a proton or sodium gradient. F-type ATPases consist of two structural domains, F(1) containing the extramembraneous catalytic core and F(0) containing the membrane proton channel, linked together by a central stalk and a peripheral stalk. During catalysis, ATP synthesis in the catalytic domain of F(1) is coupled via a rotary mechanism of the central stalk subunits to proton translocation. Component of the F(0) channel, it forms part of the peripheral stalk, linking F(1) to F(0). This is ATP synthase subunit b 1 from Roseobacter denitrificans (strain ATCC 33942 / OCh 114) (Erythrobacter sp. (strain OCh 114)).